A 230-amino-acid chain; its full sequence is Probable phosphatase IndB (230 aa).

Asp-8 functions as the Nucleophile in the catalytic mechanism. Residues Asp-8, Asp-10, and Asp-169 each contribute to the Mg(2+) site. The active-site Proton donor is the Asp-10.

Belongs to the HAD-like hydrolase superfamily. Mg(2+) serves as cofactor.

Functionally, part of an operon that could be involved in the biosynthesis of the blue pigment indigoidine, which is implicated in pathogenicity and protection from oxidative stress. The chain is Probable phosphatase IndB from Dickeya dadantii (strain 3937) (Erwinia chrysanthemi (strain 3937)).